The primary structure comprises 205 residues: Glycerol-3-phosphate acyltransferase (205 aa).

A run of 5 helical transmembrane segments spans residues 4–24, 56–76, 81–101, 112–132, and 138–158; these read IAPG…AILV, VAVL…AYAL, FWLG…VFFG, FGAI…TWLL, and GYSS…VWWF.

Belongs to the PlsY family. As to quaternary structure, probably interacts with PlsX.

Its subcellular location is the cell inner membrane. It carries out the reaction an acyl phosphate + sn-glycerol 3-phosphate = a 1-acyl-sn-glycero-3-phosphate + phosphate. It functions in the pathway lipid metabolism; phospholipid metabolism. Catalyzes the transfer of an acyl group from acyl-phosphate (acyl-PO(4)) to glycerol-3-phosphate (G3P) to form lysophosphatidic acid (LPA). This enzyme utilizes acyl-phosphate as fatty acyl donor, but not acyl-CoA or acyl-ACP. The sequence is that of Glycerol-3-phosphate acyltransferase from Citrobacter koseri (strain ATCC BAA-895 / CDC 4225-83 / SGSC4696).